The primary structure comprises 1616 residues: Protein P200 (1616 aa).

Disordered regions lie at residues methionine 1–glutamate 41, histidine 878–phenylalanine 909, glutamine 931–asparagine 975, aspartate 1004–aspartate 1083, phenylalanine 1100–glutamate 1132, and isoleucine 1159–glutamate 1433. The 2 X 26 AA repeats stretch occupies residues glutamate 891 to glutamate 1389. A compositionally biased stretch (low complexity) spans glutamate 938–proline 952. Basic and acidic residues-rich tracts occupy residues glutamine 1012–glutamine 1029 and valine 1059–proline 1081. 2 tandem repeats follow at residues glutamate 1161–glutamate 1186 and glutamate 1205–glutamate 1236. Composition is skewed to polar residues over residues valine 1200–glutamine 1227 and glutamate 1242–histidine 1251. Residues glutamate 1205–glutamate 1389 are 2 X 32 AA repeats. Over residues alanine 1256–tyrosine 1270 the composition is skewed to acidic residues. The span at serine 1276–glutamate 1285 shows a compositional bias: polar residues. Over residues tyrosine 1288–tyrosine 1302 the composition is skewed to acidic residues. A compositionally biased stretch (low complexity) spans serine 1309–glutamate 1323. 2 repeat units span residues glutamate 1310–glutamate 1339 and glutamate 1358–glutamate 1389. Residues valine 1353–glutamine 1380 show a composition bias toward polar residues. The span at glutamine 1392–proline 1406 shows a compositional bias: low complexity. Over residues valine 1416–glutamate 1433 the composition is skewed to acidic residues.

Could be an accessory structural component in cytadherence. In Mycoplasma genitalium (strain ATCC 33530 / DSM 19775 / NCTC 10195 / G37) (Mycoplasmoides genitalium), this protein is Protein P200.